Consider the following 121-residue polypeptide: Protein AC4 (121 aa).

Residues 11–30 (RGQSSNPHTSESQERNIQTG) form a disordered region. Positions 12–30 (GQSSNPHTSESQERNIQTG) are enriched in polar residues.

This sequence belongs to the geminiviridae protein AC4/C4 family.

Its function is as follows. Pathogenicity determinant. May act as a suppressor of RNA-mediated gene silencing, also known as post-transcriptional gene silencing (PTGS), a mechanism of plant viral defense that limits the accumulation of viral RNAs. The protein is Protein AC4 of Cabbage leaf curl virus (isolate Jamaica) (CaLCuV).